We begin with the raw amino-acid sequence, 206 residues long: Ras-related protein Ral-A (206 aa).

GTP-binding positions include 24-29 (GVGKSA), 40-46 (VEDYEPT), and 127-130 (NKSD). An Effector region motif is present at residues 43–51 (YEPTKADSY). Residue Thr46 is glycosylated ((Microbial infection) O-linked (Glc) threonine; by P.sordellii toxin TcsL). At Ser194 the chain carries Phosphoserine; by AURKA. Cys203 is subject to Cysteine methyl ester. A lipid anchor (S-geranylgeranyl cysteine) is attached at Cys203. Positions 204-206 (CIL) are cleaved as a propeptide — removed in mature form.

It belongs to the small GTPase superfamily. Ras family. In terms of assembly, interacts (via effector domain) with RALBP1; during mitosis, recruits RALBP1 to the mitochondrion where it promotes DNM1L phosphorylation and mitochondrial fission. Interacts with EXOC2/Sec5 and EXOC8/Exo84; binding to EXOC2 and EXOC8 is mutually exclusive. Interacts with Clostridium exoenzyme C3. Interacts with RALGPS1. Interacts with LPAR1 and LPAR2. Interacts with GRK2 in response to LPAR1 activation. RALA and GRK2 binding to LPAR1 is mutually exclusive. Interacts with CDC42. Post-translationally, phosphorylated. Phosphorylation at Ser-194 by AURKA/Aurora kinase A, during mitosis, induces RALA localization to the mitochondrion where it regulates mitochondrial fission. Prenylation is essential for membrane localization. The geranylgeranylated form and the farnesylated mutant do not undergo alternative prenylation in response to geranylgeranyltransferase I inhibitors (GGTIs) and farnesyltransferase I inhibitors (FTIs). In terms of processing, (Microbial infection) Glucosylated at Thr-46 by P.sordellii toxin TcsL from strain 6018. Monoglucosylation completely prevents the recognition of the downstream effector, blocking the GTPases in their inactive form. Not glucosylated by TcsL from strain VPI 9048.

The protein localises to the cell membrane. It localises to the cleavage furrow. Its subcellular location is the midbody. It is found in the midbody ring. The protein resides in the mitochondrion. The enzyme catalyses GTP + H2O = GDP + phosphate + H(+). Alternates between an inactive form bound to GDP and an active form bound to GTP. Activated by a guanine nucleotide-exchange factor (GEF) and inactivated by a GTPase-activating protein (GAP). Multifunctional GTPase involved in a variety of cellular processes including gene expression, cell migration, cell proliferation, oncogenic transformation and membrane trafficking. Accomplishes its multiple functions by interacting with distinct downstream effectors. Acts as a GTP sensor for GTP-dependent exocytosis of dense core vesicles. The RALA-exocyst complex regulates integrin-dependent membrane raft exocytosis and growth signaling. Key regulator of LPAR1 signaling and competes with GRK2 for binding to LPAR1 thus affecting the signaling properties of the receptor. Required for anchorage-independent proliferation of transformed cells. During mitosis, supports the stabilization and elongation of the intracellular bridge between dividing cells. Cooperates with EXOC2 to recruit other components of the exocyst to the early midbody. During mitosis, also controls mitochondrial fission by recruiting to the mitochondrion RALBP1, which mediates the phosphorylation and activation of DNM1L by the mitotic kinase cyclin B-CDK1. In Homo sapiens (Human), this protein is Ras-related protein Ral-A (RALA).